We begin with the raw amino-acid sequence, 288 residues long: Ribonuclease HIII (288 aa).

The region spanning 76–288 (YSAIGSDEVG…KNITKQFIKN (213 aa)) is the RNase H type-2 domain. D82, E83, and D185 together coordinate a divalent metal cation.

The protein belongs to the RNase HII family. RnhC subfamily. It depends on Mn(2+) as a cofactor. Requires Mg(2+) as cofactor.

The protein localises to the cytoplasm. The catalysed reaction is Endonucleolytic cleavage to 5'-phosphomonoester.. In terms of biological role, endonuclease that specifically degrades the RNA of RNA-DNA hybrids. The polypeptide is Ribonuclease HIII (Phytoplasma mali (strain AT)).